The primary structure comprises 193 residues: ATP-dependent Clp protease proteolytic subunit 1 (193 aa).

Serine 98 acts as the Nucleophile in catalysis. The active site involves histidine 123.

Belongs to the peptidase S14 family. Fourteen ClpP subunits assemble into 2 heptameric rings which stack back to back to give a disk-like structure with a central cavity, resembling the structure of eukaryotic proteasomes.

Its subcellular location is the cytoplasm. The catalysed reaction is Hydrolysis of proteins to small peptides in the presence of ATP and magnesium. alpha-casein is the usual test substrate. In the absence of ATP, only oligopeptides shorter than five residues are hydrolyzed (such as succinyl-Leu-Tyr-|-NHMec, and Leu-Tyr-Leu-|-Tyr-Trp, in which cleavage of the -Tyr-|-Leu- and -Tyr-|-Trp bonds also occurs).. Its function is as follows. Cleaves peptides in various proteins in a process that requires ATP hydrolysis. Has a chymotrypsin-like activity. Plays a major role in the degradation of misfolded proteins. This chain is ATP-dependent Clp protease proteolytic subunit 1, found in Bacillus cereus (strain ZK / E33L).